The sequence spans 775 residues: 5-methyltetrahydropteroyltriglutamate--homocysteine methyltransferase (775 aa).

5-methyltetrahydropteroyltri-L-glutamate-binding positions include 16–19 (REMK) and lysine 115. L-homocysteine is bound by residues 435-437 (IGS) and glutamate 488. L-methionine-binding positions include 435–437 (IGS) and glutamate 488. 5-methyltetrahydropteroyltri-L-glutamate-binding positions include 519–520 (RC) and tryptophan 565. An L-homocysteine-binding site is contributed by aspartate 603. Aspartate 603 contacts L-methionine. Glutamate 609 is a 5-methyltetrahydropteroyltri-L-glutamate binding site. The Zn(2+) site is built by histidine 645, cysteine 647, and glutamate 669. Histidine 698 acts as the Proton donor in catalysis. Cysteine 730 is a binding site for Zn(2+).

Belongs to the vitamin-B12 independent methionine synthase family. Requires Zn(2+) as cofactor.

It carries out the reaction 5-methyltetrahydropteroyltri-L-glutamate + L-homocysteine = tetrahydropteroyltri-L-glutamate + L-methionine. The protein operates within amino-acid biosynthesis; L-methionine biosynthesis via de novo pathway; L-methionine from L-homocysteine (MetE route): step 1/1. Catalyzes the transfer of a methyl group from 5-methyltetrahydrofolate to homocysteine resulting in methionine formation. The chain is 5-methyltetrahydropteroyltriglutamate--homocysteine methyltransferase from Coxiella burnetii (strain Dugway 5J108-111).